Consider the following 260-residue polypeptide: 14-3-3-like protein (260 aa).

Residues 240-260 (DMQDDGGDEIKEAAPKPDEQY) are disordered. Basic and acidic residues predominate over residues 247-260 (DEIKEAAPKPDEQY).

This sequence belongs to the 14-3-3 family.

The polypeptide is 14-3-3-like protein (Oenothera elata subsp. hookeri (Hooker's evening primrose)).